The following is a 218-amino-acid chain: Elongation factor Ts (218 aa).

The tract at residues 82–85 (TDFV) is involved in Mg(2+) ion dislocation from EF-Tu.

Belongs to the EF-Ts family.

Its subcellular location is the cytoplasm. Its function is as follows. Associates with the EF-Tu.GDP complex and induces the exchange of GDP to GTP. It remains bound to the aminoacyl-tRNA.EF-Tu.GTP complex up to the GTP hydrolysis stage on the ribosome. The protein is Elongation factor Ts of Prochlorococcus marinus (strain AS9601).